Reading from the N-terminus, the 1152-residue chain is Syntaxin-binding protein 5 (1152 aa).

Residues 14–35 (TAGSSSASQQQQQQQHPPGNRE) form a disordered region. Residues 17–28 (SSSASQQQQQQQ) show a composition bias toward low complexity. WD repeat units follow at residues 62–95 (SALAFDPVQKILAVGTQTGALRLFGRPGVECYCQ), 102–141 (VIQLQFLINEGALVSALADDTLHLWNLRQKRPAVLHSLKF), 146–182 (VTFCHLPFQSKWLYVGTERGNIHIVNVESFTLSGYVI), 201–235 (HISDNPMDEGKLLIGFESGTVVLWDLKSKKADYRY), 241–273 (IHSVAWHHEGKQFICSHSDGTLTIWNVRSPTKP), 295–337 (PILK…KSTA), 345–379 (IVDFLTLCETPYPNDFQEPYAVVVLLEKDLVLIDL), 401–478 (TCCE…YKLK), 506–620 (QIIS…ELVI), and 634–696 (TSLA…SGAG). Disordered regions lie at residues 557 to 596 (TPEGEQPPPLSTPVGSSTSQPIPPQSHPSTSSSSSDGLRD) and 675 to 731 (SNDP…QKVN). Residue serine 693 is modified to Phosphoserine. Positions 713–722 (SPTSGSSSPH) are enriched in low complexity. Serine 724 is subject to Phosphoserine; by PKA. Serine 760 is subject to Phosphoserine. Threonine 763 carries the post-translational modification Phosphothreonine. Residue serine 783 is modified to Phosphoserine. The residue at position 785 (threonine 785) is a Phosphothreonine. The residue at position 786 (serine 786) is a Phosphoserine. WD repeat units lie at residues 795-852 (ISAL…SGTI), 861-935 (RMAF…QNCA), 940-984 (ITET…LDVY), and 998-1021 (CFANSGQALYLVSPTEIQRLTYSQ). Over residues 879-893 (WTEHNVPEEKDEKEK) the composition is skewed to basic and acidic residues. The disordered stretch occupies residues 879 to 907 (WTEHNVPEEKDEKEKLKKRRPVSVSPSSS). Serine 901 and serine 903 each carry phosphoserine. Position 1040 is a phosphothreonine (threonine 1040). A phosphoserine mark is found at serine 1059 and serine 1132. Residues 1087–1147 (GIEGVKGAAS…HEMMLKYKDK (61 aa)) enclose the v-SNARE coiled-coil homology domain.

The protein belongs to the WD repeat L(2)GL family. In terms of assembly, part of a complex that contains STXBP5, STX4A and SNAP23. Interacts with STX1A and STX4A via its v-SNARE homology domain. Part of a complex that contains STX1, STXBP5, SNAP25 and SYT1. Phosphorylation by PKA reduces interaction with STX1A and enhances synaptic neurotransmitter release. Isoform 1 is detected in heart, brain, lung, liver, skeletal muscle, kidney and testis. Isoform 2 is detected in brain and in testis. Isoform 3 is detected in testis.

It is found in the cytoplasm. It localises to the cell membrane. Its subcellular location is the cytoplasmic vesicle membrane. The protein resides in the synapse. The protein localises to the cytoplasmic vesicle. It is found in the secretory vesicle. It localises to the synaptic vesicle. Inhibits translocation of GLUT4 from intracellular vesicles to the plasma membrane. Plays a regulatory role in calcium-dependent exocytosis and neurotransmitter release. Inhibits membrane fusion between transport vesicles and the plasma membrane. May modulate the assembly of trans-SNARE complexes between transport vesicles and the plasma membrane. Competes with STXBP1 for STX1 binding. This chain is Syntaxin-binding protein 5 (Stxbp5), found in Rattus norvegicus (Rat).